The sequence spans 59 residues: uncharacterized protein (59 aa).

A helical membrane pass occupies residues 7–27 (LLLLVAIALISAFALTVTGVV).

Its subcellular location is the membrane. This is an uncharacterized protein from Pyrobaculum aerophilum (strain ATCC 51768 / DSM 7523 / JCM 9630 / CIP 104966 / NBRC 100827 / IM2).